We begin with the raw amino-acid sequence, 303 residues long: Glutaminase (303 aa).

Substrate contacts are provided by Ser63, Asn113, Glu157, Asn164, Tyr188, Tyr239, and Val257.

This sequence belongs to the glutaminase family. Homotetramer.

It catalyses the reaction L-glutamine + H2O = L-glutamate + NH4(+). In Saccharopolyspora erythraea (strain ATCC 11635 / DSM 40517 / JCM 4748 / NBRC 13426 / NCIMB 8594 / NRRL 2338), this protein is Glutaminase.